A 159-amino-acid chain; its full sequence is ATP-dependent Clp protease adapter protein CLPS1, chloroplastic (159 aa).

The N-terminal 44 residues, 1–44 (METAICGRLALAPSSLFNSKSGDKHLVSKGPCVNRSILMTLSTS), are a transit peptide targeting the chloroplast.

It belongs to the ClpS family. Interacts with CLPC1 (via N-terminus) and CLPC2, but not with CLPt1 or CLPT2. Binds to ClpF; this interaction stimulates their association with ClpC. In terms of tissue distribution, expressed exclusively in photosynthetic green tissues with high levels in young, developing leaf tissues.

Its subcellular location is the plastid. The protein resides in the chloroplast stroma. Small adapter protein that modulate the activity of CLPC. Involved in plastid biogenesis in particular when chloroplast protein synthesis capacity is a limiting factor. Probably involved in substrate selection for plastid Clp protease system. Recruitment to ClpC chaperones is facilitated by CLPF thus forming a binary adapter for selective substrate recognition and delivery to plastid Clp protease system (CLPC). The chain is ATP-dependent Clp protease adapter protein CLPS1, chloroplastic from Arabidopsis thaliana (Mouse-ear cress).